Reading from the N-terminus, the 396-residue chain is MKKYNRIFTIVIDSLGIGGMPDSMEYGDKNVDTLGHIAESVEKFNIPNLEKLGIANLHPIKHVKEANKPLAHYMKMKEASVGKDTMTGHWEMMGLHITKPFQTFTDTGFPQELLDELTKRTGHNIVGNKSSSGTEILDELGEHQMETGDMIVYTSADSVLQICGHEETFGLDELYRCCEIARELTLKDEWKVGRVIARPYLGAKKGEFKRTSNRHDYALKPYGSTALNALKDNGFDVISVGKISDIFDGEGITESNKSKSSVHGMEQTLEIMDRDFKGLCFVNLVDFDALWGHRRNPVGYAEEIEKFDVNLGKVLEKLKEDDLLIITADHGNDPTYVGSDHTREFVPFIAYSPSMKENGLMDTVDSFATIGATIADNFELSMPENTIGKSVLEKLV.

6 residues coordinate Mn(2+): Asp-13, Asp-288, His-293, Asp-329, His-330, and His-341.

Belongs to the phosphopentomutase family. Mn(2+) is required as a cofactor.

Its subcellular location is the cytoplasm. The enzyme catalyses 2-deoxy-alpha-D-ribose 1-phosphate = 2-deoxy-D-ribose 5-phosphate. The catalysed reaction is alpha-D-ribose 1-phosphate = D-ribose 5-phosphate. Its pathway is carbohydrate degradation; 2-deoxy-D-ribose 1-phosphate degradation; D-glyceraldehyde 3-phosphate and acetaldehyde from 2-deoxy-alpha-D-ribose 1-phosphate: step 1/2. Isomerase that catalyzes the conversion of deoxy-ribose 1-phosphate (dRib-1-P) and ribose 1-phosphate (Rib-1-P) to deoxy-ribose 5-phosphate (dRib-5-P) and ribose 5-phosphate (Rib-5-P), respectively. The chain is Phosphopentomutase from Clostridium botulinum (strain Alaska E43 / Type E3).